The sequence spans 240 residues: RNA transcription, translation and transport factor protein (240 aa).

It belongs to the RTRAF family. In terms of assembly, homodimer. Component of a tRNA-splicing ligase complex.

Its subcellular location is the nucleus. The protein resides in the cytoplasm. The protein localises to the cytosol. It localises to the perinuclear region. It is found in the cytoskeleton. Its subcellular location is the microtubule organizing center. The protein resides in the centrosome. Functionally, RNA-binding protein involved in modulation of mRNA transcription by Polymerase II. Component of the tRNA-splicing ligase complex. This is RNA transcription, translation and transport factor protein from Xenopus laevis (African clawed frog).